The sequence spans 591 residues: Uncoordinated protein 58 (591 aa).

A disordered region spans residues 1-24; the sequence is MFFYSPNVAPQPSSTSHRRPTLTH. Residues 184–204 traverse the membrane as a helical segment; that stretch reads VILVSVLIGYLCLGAWILMLL. Asn226 is a glycosylation site (N-linked (GlcNAc...) asparagine). 5 consecutive transmembrane segments (helical) span residues 289–309, 318–338, 400–420, 428–448, and 453–473; these read TFPTAILYVLTVLTTCGYGEV, VFSVAFALVGIPLMFITAADI, PIGAYVSCICIYCSIGSAMFI, FIHAFHFGFNLIVTVGLGDIV, and IFLSLIVAFVIVGLSVVTMCV.

The protein belongs to the two pore domain potassium channel (TC 1.A.1.8) family.

The protein resides in the membrane. Has a role in mobility, possibly in the transport of potassium in muscles. This Caenorhabditis elegans protein is Uncoordinated protein 58.